The following is a 339-amino-acid chain: Ketol-acid reductoisomerase (NADP(+)) (339 aa).

The KARI N-terminal Rossmann domain maps to 1-182; sequence MRVYYDRDAD…GGGRSGVIET (182 aa). NADP(+) contacts are provided by residues 24-27, R48, S51, T53, and 83-86; these read YGSQ and DELQ. H108 is a catalytic residue. G134 provides a ligand contact to NADP(+). The 146-residue stretch at 183 to 328 folds into the KARI C-terminal knotted domain; sequence TFKEECETDL…GKLRAMMPWI (146 aa). D191, E195, E227, and E231 together coordinate Mg(2+). Position 252 (S252) interacts with substrate.

This sequence belongs to the ketol-acid reductoisomerase family. Mg(2+) serves as cofactor.

The catalysed reaction is (2R)-2,3-dihydroxy-3-methylbutanoate + NADP(+) = (2S)-2-acetolactate + NADPH + H(+). It catalyses the reaction (2R,3R)-2,3-dihydroxy-3-methylpentanoate + NADP(+) = (S)-2-ethyl-2-hydroxy-3-oxobutanoate + NADPH + H(+). The protein operates within amino-acid biosynthesis; L-isoleucine biosynthesis; L-isoleucine from 2-oxobutanoate: step 2/4. It participates in amino-acid biosynthesis; L-valine biosynthesis; L-valine from pyruvate: step 2/4. Involved in the biosynthesis of branched-chain amino acids (BCAA). Catalyzes an alkyl-migration followed by a ketol-acid reduction of (S)-2-acetolactate (S2AL) to yield (R)-2,3-dihydroxy-isovalerate. In the isomerase reaction, S2AL is rearranged via a Mg-dependent methyl migration to produce 3-hydroxy-3-methyl-2-ketobutyrate (HMKB). In the reductase reaction, this 2-ketoacid undergoes a metal-dependent reduction by NADPH to yield (R)-2,3-dihydroxy-isovalerate. This chain is Ketol-acid reductoisomerase (NADP(+)), found in Brucella melitensis biotype 2 (strain ATCC 23457).